A 968-amino-acid chain; its full sequence is C-1-tetrahydrofolate synthase, cytoplasmic (968 aa).

Positions 1–338 (MSAQYQRFLK…ERLAKSQWAL (338 aa)) are methylenetetrahydrofolate dehydrogenase and cyclohydrolase. Residues 86–90 (YIRMK) and 133–135 (VQM) contribute to the substrate site. NADP(+) is bound by residues 205 to 207 (GRS) and Ser230. 305 to 309 (PGGVG) contributes to the substrate binding site. The formyltetrahydrofolate synthetase stretch occupies residues 339–968 (QTLPLKPQRP…TETGEIEGLF (630 aa)). 413–420 (TPLGEGKT) serves as a coordination point for ATP.

The protein in the N-terminal section; belongs to the tetrahydrofolate dehydrogenase/cyclohydrolase family. In the C-terminal section; belongs to the formate--tetrahydrofolate ligase family. Homodimer. As to expression, present in all tissues.

The protein resides in the cytoplasm. It catalyses the reaction (6R)-5,10-methylene-5,6,7,8-tetrahydrofolate + NADP(+) = (6R)-5,10-methenyltetrahydrofolate + NADPH. The catalysed reaction is (6R)-5,10-methenyltetrahydrofolate + H2O = (6R)-10-formyltetrahydrofolate + H(+). It carries out the reaction (6S)-5,6,7,8-tetrahydrofolate + formate + ATP = (6R)-10-formyltetrahydrofolate + ADP + phosphate. Its pathway is one-carbon metabolism; tetrahydrofolate interconversion. In Drosophila melanogaster (Fruit fly), this protein is C-1-tetrahydrofolate synthase, cytoplasmic (pug).